We begin with the raw amino-acid sequence, 195 residues long: MASQKRPSQRHGSKYLATASTMDHARHGFLPRHRDTGILDSIGRFFSGDRGAPKRGSGKVPWLKQSRSPLPSHARSRPGLCHMYKDSHTRTTHYGSLPQKSQRTQDENPVVHFFKNIVTPRTPPPSQGKGRGLSLSRFSWGAEGQKPGFGYGGRASDYKSAHKGFKGAYDAQGTLSKIFKLGGRDSRSGSPMARR.

Ala-2 carries the N-acetylalanine modification. A phosphoserine mark is found at Ser-8 and Ser-13. The residue at position 15 (Tyr-15) is a Phosphotyrosine. Thr-18 is modified (phosphothreonine). Ser-20 is modified (phosphoserine). At Thr-21 the chain carries Phosphothreonine. 2 positions are modified to citrulline: Arg-26 and Arg-32. Thr-36 carries the post-translational modification Phosphothreonine. Phosphoserine is present on Ser-41. Omega-N-methylarginine is present on residues Arg-44 and Arg-50. A disordered region spans residues 45–79 (FFSGDRGAPKRGSGKVPWLKQSRSPLPSHARSRPG). At Ser-57 the chain carries Phosphoserine. At Thr-92 the chain carries Phosphothreonine. Tyr-94 carries the phosphotyrosine modification. The residue at position 101 (Ser-101) is a Phosphoserine. Phosphothreonine occurs at positions 104, 119, and 122. The disordered stretch occupies residues 117 to 139 (IVTPRTPPPSQGKGRGLSLSRFS). Deamidated glutamine is present on Gln-127. An Omega-N-methylarginine; alternate modification is found at Arg-131. A Symmetric dimethylarginine; alternate modification is found at Arg-131. Ser-139 is subject to Phosphoserine. Lys-146 is subject to N6-acetyllysine. At Arg-154 the chain carries Citrulline. Gln-172 carries the deamidated glutamine modification. Arg-184 carries the post-translational modification Citrulline. The residue at position 186 (Ser-186) is a Phosphoserine. The residue at position 190 (Ser-190) is a Phosphoserine; by UHMK1. Arg-195 is modified (citrulline).

The protein belongs to the myelin basic protein family. In terms of assembly, homodimer. In terms of processing, as in other animals, several charge isomers may be produced as a result of optional post-translational modifications, such as phosphorylation of serine or threonine residues, deamidation of glutamine or asparagine residues, citrullination and methylation of arginine residues. Arg-131 was found to be 44% monomethylated and 11% symmetrically dimethylated. Post-translationally, phosphorylated by TAOK2, VRK2, MAPK11, MAPK12, MAPK14 and MINK1. In terms of processing, proteolytically cleaved in B cell lysosomes by cathepsin CTSG which degrades the major immunogenic MBP epitope and prevents the activation of MBP-specific autoreactive T cells. In terms of tissue distribution, found in both the central and the peripheral nervous system.

Its subcellular location is the myelin membrane. Functionally, is, with PLP, the most abundant protein component of the myelin membrane in the CNS. Has a role in both the formation and stabilization of this compact multilayer arrangement of bilayers. Each splice variant and charge isomer may have a specialized function in the assembly of an optimized, biochemically functional myelin membrane. This chain is Myelin basic protein (Mbp), found in Rattus norvegicus (Rat).